A 321-amino-acid polypeptide reads, in one-letter code: MENTIGTPTLWCSFGVFLIIIIIIEMSIQKIFVYKESAFKIALYSSCISMLTAILFDVLIWIYIKFTVNSYLANINFLTFISGYLLEQSLSMDNVAMWFFLFQLFSISMVHQRVILFYGTFLALVFRSSIIFFGVWLLSKWSFLFYVLSIILLFTGIITILSNGVNKKTDVQNTFIMSWIYKKFRITKNFSKNNFFTKENGVIVATPLFLVLILIELNDIIFSIDSIPAIFLITKDPFIIITSSFFSIIGLRSIYVILANSIQKFYIIKYGITLILIFISIKILLKEFVDIPIMLSSFFIVCILVACFIIEKFFFQVKSKN.

A run of 9 helical transmembrane segments spans residues 10–28 (LWCS…EMSI), 41–63 (IALY…IWIY), 94–111 (NVAM…SMVH), 116–138 (LFYG…VWLL), 143–165 (FLFY…SNGV), 200–222 (NGVI…DIIF), 237–259 (PFII…VILA), 266–283 (YIIK…SIKI), and 293–315 (IMLS…KFFF).

It belongs to the TerC family.

It is found in the cell membrane. This is an uncharacterized protein from Buchnera aphidicola subsp. Baizongia pistaciae (strain Bp).